The sequence spans 295 residues: Indole-3-glycerol phosphate synthase (295 aa).

It belongs to the TrpC family.

The enzyme catalyses 1-(2-carboxyphenylamino)-1-deoxy-D-ribulose 5-phosphate + H(+) = (1S,2R)-1-C-(indol-3-yl)glycerol 3-phosphate + CO2 + H2O. Its pathway is amino-acid biosynthesis; L-tryptophan biosynthesis; L-tryptophan from chorismate: step 4/5. This chain is Indole-3-glycerol phosphate synthase, found in Prochlorococcus marinus (strain NATL1A).